Reading from the N-terminus, the 351-residue chain is Photosystem II D2 protein (351 aa).

The helical transmembrane segment at 39–59 (TAYLAIGGWLTGTTFVTSWYT) threads the bilayer. His-116 contacts chlorophyll a. A helical transmembrane segment spans residues 123–139 (GFMLRQFEIARLVGIRP). Pheophytin a is bound by residues Gln-128 and Asn-141. Residues 151 to 164 (VFVSVFLMYPLGQS) traverse the membrane as a helical segment. His-196 serves as a coordination point for chlorophyll a. The helical transmembrane segment at 206 to 226 (GALLCAIHGATVENTLFEDGE) threads the bilayer. A plastoquinone is bound by residues His-213 and Phe-260. His-213 is a binding site for Fe cation. Residue His-267 coordinates Fe cation. Residues 277–293 (GLWTSSIGIIGLALNLR) traverse the membrane as a helical segment.

Belongs to the reaction center PufL/M/PsbA/D family. PSII is composed of 1 copy each of membrane proteins PsbA, PsbB, PsbC, PsbD, PsbE, PsbF, PsbH, PsbI, PsbJ, PsbK, PsbL, PsbM, PsbT, PsbX, PsbY, PsbZ, Psb30/Ycf12, peripheral proteins PsbO, CyanoQ (PsbQ), PsbU, PsbV and a large number of cofactors. It forms dimeric complexes. The D1/D2 heterodimer binds P680, chlorophylls that are the primary electron donor of PSII, and subsequent electron acceptors. It shares a non-heme iron and each subunit binds pheophytin, quinone, additional chlorophylls, carotenoids and lipids. There is also a Cl(-1) ion associated with D1 and D2, which is required for oxygen evolution. The PSII complex binds additional chlorophylls, carotenoids and specific lipids. serves as cofactor.

It is found in the cellular thylakoid membrane. It catalyses the reaction 2 a plastoquinone + 4 hnu + 2 H2O = 2 a plastoquinol + O2. Its function is as follows. Photosystem II (PSII) is a light-driven water:plastoquinone oxidoreductase that uses light energy to abstract electrons from H(2)O, generating O(2) and a proton gradient subsequently used for ATP formation. It consists of a core antenna complex that captures photons, and an electron transfer chain that converts photonic excitation into a charge separation. The D1/D2 (PsbA/PsbD) reaction center heterodimer binds P680, the primary electron donor of PSII as well as several subsequent electron acceptors. D2 is needed for assembly of a stable PSII complex. The sequence is that of Photosystem II D2 protein from Synechococcus sp. (strain WH7803).